The sequence spans 219 residues: MPVKWLLHWQPNQGSTFSSQILNEVTQSIESLNGVKEGTWKATLNYYKPMLQDQANQAEFPREFVGISLPEEPDKYYFVIRSQRIVVEADSSIQMIMESLQSYKCKLSFYFEGLEYQLGDFRLRVGKVVPTHAETIRGVVMEVEYLPISSMGMAKKLMEEFLEIWQEAMSKRSLPGKFVNKELNFEKFGLGDNYTPQHTAVGYAFFMANLMAAIQAGRG.

It belongs to the Mediator complex subunit 20 family. As to quaternary structure, component of the Mediator complex.

Its subcellular location is the nucleus. In terms of biological role, component of the Mediator complex, a coactivator involved in the regulated transcription of nearly all RNA polymerase II-dependent genes. Mediator functions as a bridge to convey information from gene-specific regulatory proteins to the basal RNA polymerase II transcription machinery. The Mediator complex, having a compact conformation in its free form, is recruited to promoters by direct interactions with regulatory proteins and serves for the assembly of a functional preinitiation complex with RNA polymerase II and the general transcription factors. This Arabidopsis thaliana (Mouse-ear cress) protein is Mediator of RNA polymerase II transcription subunit 20b (MED20B).